We begin with the raw amino-acid sequence, 433 residues long: Sulfhydrylase FUB7 (433 aa).

Lys-211 is modified (N6-(pyridoxal phosphate)lysine).

This sequence belongs to the trans-sulfuration enzymes family. The cofactor is pyridoxal 5'-phosphate.

The protein operates within mycotoxin biosynthesis. In terms of biological role, sulfhydrylase; part of the gene cluster that mediates the biosynthesis of fusaric acid, a mycotoxin with low to moderate toxicity to animals and humans, but with high phytotoxic properties. L-aspartate is suggested as fusaric acid amino acid precursor that is activated and further processed to O-acetyl-L-homoserine by cluster enzymes aspartate kinase FUB3 and homoserine O-acetyltransferase FUB5, as well as enzymes of the primary metabolism. The polyketide synthase (PKS) FUB1 generates the triketide trans-2-hexenal which is presumptively released by the hydrolase FUB4 and linked to the NRPS-bound amino acid precursor by NAD(P)-dependent dehydrogenase FUB6. FUB1, FUB4, and the non-canonical NRPS Fub8 may form an enzyme complex. Further processing of the NRPS-bound intermediate might be carried out by FUB6 and the O-acetylhomoserine FUB7, enabling a spontaneous electrocyclization to close the carbon backbone of fusaric acid. Dihydrofusaric acid is likely to be released via reduction by the thioester reductase (TR) domain of FUB8 whereupon the final oxidation to fusaric acid may (also) be performed by the FMN-dependent dehydrogenase FUB9. The polypeptide is Sulfhydrylase FUB7 (Gibberella moniliformis (strain M3125 / FGSC 7600) (Maize ear and stalk rot fungus)).